Reading from the N-terminus, the 478-residue chain is MAARPITLGIDLGTTSVKAALLRAAPDDPSGFAVLASCARAARAEAAVESAVAGPQGREQDVSRILQALHECLAALPRPQLRSVVGIGVSGQMHGVVFWKTGQGCEWTEGGITPVFEPRAVSHLVTWQDGRCSSEFLASLPQPKSHLSVATGFGCATIFWLLKYRPEFLKSYDAAGTIHDYVVAMLCGLPRPLMSDQNAASWGYFNTQSQSWNVETLRSSGFPVHLLPDIAEPGSVAGRTSHMWFEIPKGTQVGVALGDLQASVYSCMAQRTDAVLNISTSVQLAASMPSGFQPAQTPDPTAPVAYFPYFNRTYLGVAASLNGGNVLATFVHMLVQWMADLGLEVEESTVYSRMIQAAVQQRDTHLTITPTVLGERHLPDQLASVTRISSSDLSLGHVTRALCRGIVQNLHSMLPIQQLQEWGVERVMGSGSALSRNDVLKQEVQRAFPLPMSFGQDVDAAVGAALVMLRRHLNQKES.

It belongs to the FGGY kinase family. Strongly expressed in liver, kidney and pancreas. Expressed at lower levels in placenta and heart. Very weakly expressed in lung and brain.

Its subcellular location is the cytoplasm. The catalysed reaction is sedoheptulose + ATP = D-sedoheptulose 7-phosphate + ADP + H(+). Acts as a modulator of macrophage activation through control of glucose metabolism. This is Sedoheptulokinase from Homo sapiens (Human).